The primary structure comprises 302 residues: Spermidine synthase (302 aa).

Met1 bears the N-acetylmethionine mark. One can recognise a PABS domain in the interval 18–253 (EGWFRETCSL…GQIGFMLCSK (236 aa)). Position 49 (Gln49) interacts with S-adenosyl 3-(methylsulfanyl)propylamine. Tyr79 serves as a coordination point for putrescine. Residues Gln80, Asp104, Glu124, 155-156 (DG), and Asp173 each bind S-adenosyl 3-(methylsulfanyl)propylamine. The active-site Proton acceptor is the Asp173. Putrescine-binding positions include 173–176 (DSSD) and Tyr241.

This sequence belongs to the spermidine/spermine synthase family. As to quaternary structure, homodimer or homotetramer.

It carries out the reaction S-adenosyl 3-(methylsulfanyl)propylamine + putrescine = S-methyl-5'-thioadenosine + spermidine + H(+). Its pathway is amine and polyamine biosynthesis; spermidine biosynthesis; spermidine from putrescine: step 1/1. The activity is thought to be regulated mainly by the availability of decarboxylated S-adenosylmethionine. Catalyzes the production of spermidine from putrescine and decarboxylated S-adenosylmethionine (dcSAM). Has a strong preference for putrescine as substrate, and has very low activity towards 1,3-diaminopropane. Has extremely low activity towards spermidine. This Mus musculus (Mouse) protein is Spermidine synthase (Srm).